Reading from the N-terminus, the 706-residue chain is Envelope glycoprotein H (706 aa).

The signal sequence occupies residues 1-18 (MQLLCVFCLVLLWEVGAA). Over 19 to 682 (SLSEVKLHLD…LYEERAHVVL (664 aa)) the chain is Virion surface. Asn60 carries an N-linked (GlcNAc...) asparagine; by host glycan. Intrachain disulfides connect Cys120–Cys312 and Cys278–Cys335. Residues 165–229 (DKFQYTGAMT…QSGDYSLVIV (65 aa)) form an interaction with gL region. Asn435 carries an N-linked (GlcNAc...) asparagine; by host glycan. 2 disulfides stabilise this stretch: Cys454–Cys478 and Cys534–Cys587. Residues Asn549 and Asn604 are each glycosylated (N-linked (GlcNAc...) asparagine; by host). Cysteines 612 and 615 form a disulfide. Asn664 carries N-linked (GlcNAc...) asparagine; by host glycosylation. A helical membrane pass occupies residues 683-703 (AIILYFIAFALGIFLVHKIVM). Residues 704–706 (FFL) lie on the Intravirion side of the membrane.

It belongs to the herpesviridae glycoprotein H family. Interacts with glycoprotein L (gL); this interaction is necessary for the correct processing and cell surface expression of gH. The heterodimer gH/gL seems to interact with gB trimers during fusion. The heterodimer gH/gL interacts with host EPHA2 to facilitate virus internalization and fusion. Interacts with glycoprotein 42/BZLF2. Post-translationally, N-glycosylated, O-glycosylated, and sialylated.

Its subcellular location is the virion membrane. It is found in the host cell membrane. It localises to the host endosome membrane. In terms of biological role, the heterodimer glycoprotein H-glycoprotein L is required for the fusion of viral and plasma membranes leading to virus entry into the host cell. Following initial binding to host receptor, membrane fusion is mediated by the fusion machinery composed of gB and the heterodimer gH/gL. May also be involved in the fusion between the virion envelope and the outer nuclear membrane during virion morphogenesis. The heterodimer gH/gL targets also host EPHA2 to promote viral entry. The polypeptide is Envelope glycoprotein H (Homo sapiens (Human)).